Here is a 321-residue protein sequence, read N- to C-terminus: Glucokinase (321 aa).

8–13 contacts ATP; it reads GDVGGT.

The protein belongs to the bacterial glucokinase family.

Its subcellular location is the cytoplasm. The catalysed reaction is D-glucose + ATP = D-glucose 6-phosphate + ADP + H(+). The sequence is that of Glucokinase from Erwinia tasmaniensis (strain DSM 17950 / CFBP 7177 / CIP 109463 / NCPPB 4357 / Et1/99).